We begin with the raw amino-acid sequence, 1273 residues long: DNA-directed RNA polymerase subunit beta (1273 aa).

It belongs to the RNA polymerase beta chain family. In terms of assembly, the RNAP catalytic core consists of 2 alpha, 1 beta, 1 beta' and 1 omega subunit. When a sigma factor is associated with the core the holoenzyme is formed, which can initiate transcription.

The catalysed reaction is RNA(n) + a ribonucleoside 5'-triphosphate = RNA(n+1) + diphosphate. In terms of biological role, DNA-dependent RNA polymerase catalyzes the transcription of DNA into RNA using the four ribonucleoside triphosphates as substrates. This chain is DNA-directed RNA polymerase subunit beta, found in Aster yellows witches'-broom phytoplasma (strain AYWB).